Here is a 205-residue protein sequence, read N- to C-terminus: MLVCGVDEAGRGSLVGPLVIAGVAIKRNRMRELKSMGVRDSKKLTRKARESLYPEIVNMADSYHISRVPPGVVDRSVGRHMLNDLEARYMARVITRLGHGTTYVDSCDVNPRRFGGRVSEMSGRTVRSYHRADDRFVIVSAASILAKVARDRSIERLRKSHDVGSGYPSDRRTVGFVRGYYNKNGAMPPFVRRSWRPARLIEAGG.

Residues 1-205 (MLVCGVDEAG…RPARLIEAGG (205 aa)) form the RNase H type-2 domain. The a divalent metal cation site is built by D7, E8, and D105.

The protein belongs to the RNase HII family. Requires Mn(2+) as cofactor. The cofactor is Mg(2+).

Its subcellular location is the cytoplasm. It carries out the reaction Endonucleolytic cleavage to 5'-phosphomonoester.. Endonuclease that specifically degrades the RNA of RNA-DNA hybrids. The chain is Ribonuclease HII from Cenarchaeum symbiosum (strain A).